The chain runs to 58 residues: Large ribosomal subunit protein bL32 (58 aa).

The protein belongs to the bacterial ribosomal protein bL32 family.

The sequence is that of Large ribosomal subunit protein bL32 from Limosilactobacillus fermentum (strain NBRC 3956 / LMG 18251) (Lactobacillus fermentum).